The chain runs to 313 residues: MLKMESTQQMVSSIINTSFEAAVVAATSTLELMGIQYDYNEVFTRVKSKFDYVMDDSGVKNNLLGKAITIAQALNGKFGSAIRNRNWMSDSKTVAKLDEDVNKLRMTLSSKGIDQKMRVLNACFSVKRIPGKSSSIIKCTRLMKDKIERGEVEVDDSYVDEKMEIDTIDWKSRYDQLEKRFESLKQRVNEKYNTWVQKAKKVNENMYSLQNVISQQQNQIADLQQYCNKLEADLQGKFSSLVSSVEWYLRSMELPDDVKTDIEQQLNSIDLINPINAIDDIESLIRNLIQDYDRTFLMLKGLLKQCNYEYAYE.

The tract at residues 1-149 (MLKMESTQQM…TRLMKDKIER (149 aa)) is RNA-binding. The dimerization stretch occupies residues 150 to 206 (GEVEVDDSYVDEKMEIDTIDWKSRYDQLEKRFESLKQRVNEKYNTWVQKAKKVNENM). The stretch at 166-237 (DTIDWKSRYD…NKLEADLQGK (72 aa)) forms a coiled coil. The segment at 170 to 234 (WKSRYDQLEK…QYCNKLEADL (65 aa)) is interaction with host ZC3H7B. Residues 208–313 (SLQNVISQQQ…KQCNYEYAYE (106 aa)) form an interaction with host EIF4G1 region.

Belongs to the rotavirus NSP3 family. Homodimer. Interacts (via the coiled-coil region) with host ZC3H7B (via LD motif). Interacts with host EIF4G1.

It localises to the host cytoplasm. Plays an important role in stimulating the translation of viral mRNAs. These mRNAs are capped but not polyadenylated, instead terminating in a conserved sequence 'GACC' at the 3' that is recognized by NSP3, which competes with host PABPC1 for EIF4G1 binding. The interaction between NSP3 and host EIF4G1 stabilizes the EIF4E-EIF4G1 interaction, thereby facilitating the initiation of capped mRNA translation. In Rotavirus A (strain RVA/Human/United Kingdom/ST3/1975/G4P2A[6]) (RV-A), this protein is Non-structural protein 3.